We begin with the raw amino-acid sequence, 234 residues long: Peptidyl-tRNA hydrolase (234 aa).

Tyrosine 14 contributes to the tRNA binding site. The active-site Proton acceptor is the histidine 19. Residues phenylalanine 64, asparagine 66, and asparagine 112 each coordinate tRNA. The interval 187–234 (TGTKADEEKPKPAKSHIHQARNGVQPKKLPETGPMAEMLKKMFGPKKD) is disordered.

The protein belongs to the PTH family. As to quaternary structure, monomer.

The protein localises to the cytoplasm. It carries out the reaction an N-acyl-L-alpha-aminoacyl-tRNA + H2O = an N-acyl-L-amino acid + a tRNA + H(+). Its function is as follows. Hydrolyzes ribosome-free peptidyl-tRNAs (with 1 or more amino acids incorporated), which drop off the ribosome during protein synthesis, or as a result of ribosome stalling. Catalyzes the release of premature peptidyl moieties from peptidyl-tRNA molecules trapped in stalled 50S ribosomal subunits, and thus maintains levels of free tRNAs and 50S ribosomes. The polypeptide is Peptidyl-tRNA hydrolase (Allorhizobium ampelinum (strain ATCC BAA-846 / DSM 112012 / S4) (Agrobacterium vitis (strain S4))).